The following is a 384-amino-acid chain: Probable zinc-binding alcohol dehydrogenase Rv1895 (384 aa).

Residues C38, H59, C89, C92, C95, and C103 each contribute to the Zn(2+) site.

This sequence belongs to the zinc-containing alcohol dehydrogenase family. Requires Zn(2+) as cofactor.

The enzyme catalyses a primary alcohol + NAD(+) = an aldehyde + NADH + H(+). The catalysed reaction is a secondary alcohol + NAD(+) = a ketone + NADH + H(+). The chain is Probable zinc-binding alcohol dehydrogenase Rv1895 from Mycobacterium tuberculosis (strain ATCC 25618 / H37Rv).